Here is a 174-residue protein sequence, read N- to C-terminus: Large ribosomal subunit protein uL10 (174 aa).

It belongs to the universal ribosomal protein uL10 family. In terms of assembly, part of the ribosomal stalk of the 50S ribosomal subunit. The N-terminus interacts with L11 and the large rRNA to form the base of the stalk. The C-terminus forms an elongated spine to which L12 dimers bind in a sequential fashion forming a multimeric L10(L12)X complex.

In terms of biological role, forms part of the ribosomal stalk, playing a central role in the interaction of the ribosome with GTP-bound translation factors. This chain is Large ribosomal subunit protein uL10, found in Anaeromyxobacter dehalogenans (strain 2CP-C).